Here is a 413-residue protein sequence, read N- to C-terminus: N5-carboxyaminoimidazole ribonucleotide synthase (413 aa).

The interval 1-21 (MKRVSEQAGNPDGNPQAHVPG) is disordered. Residues Lys-122, Lys-162, 199–202 (EEKV), Glu-207, and 289–290 (NE) each bind ATP. The region spanning 126-319 (RERLAELGAP…QFEQHLRAVM (194 aa)) is the ATP-grasp domain.

Belongs to the PurK/PurT family. As to quaternary structure, homodimer.

It catalyses the reaction 5-amino-1-(5-phospho-beta-D-ribosyl)imidazole + hydrogencarbonate + ATP = 5-carboxyamino-1-(5-phospho-D-ribosyl)imidazole + ADP + phosphate + 2 H(+). It functions in the pathway purine metabolism; IMP biosynthesis via de novo pathway; 5-amino-1-(5-phospho-D-ribosyl)imidazole-4-carboxylate from 5-amino-1-(5-phospho-D-ribosyl)imidazole (N5-CAIR route): step 1/2. Functionally, catalyzes the ATP-dependent conversion of 5-aminoimidazole ribonucleotide (AIR) and HCO(3)(-) to N5-carboxyaminoimidazole ribonucleotide (N5-CAIR). The protein is N5-carboxyaminoimidazole ribonucleotide synthase of Corynebacterium ammoniagenes (Brevibacterium ammoniagenes).